A 78-amino-acid chain; its full sequence is Pancreatic polypeptide prohormone (78 aa).

The signal sequence occupies residues 1 to 19 (LLLSTCVALLLQPPLGALG). Position 55 is a tyrosine amide (Tyr-55).

It belongs to the NPY family.

The protein localises to the secreted. Functionally, hormone secreted by pancreatic cells that acts as a regulator of pancreatic and gastrointestinal functions probably by signaling through the G protein-coupled receptor NPY4R2. The protein is Pancreatic polypeptide prohormone (PPY) of Ovis aries (Sheep).